A 143-amino-acid chain; its full sequence is Deoxyuridine 5'-triphosphate nucleotidohydrolase (143 aa).

Residues 63–65 (RSG), Asn-76, 80–82 (TID), and Lys-90 each bind substrate.

It belongs to the dUTPase family. Requires Mg(2+) as cofactor.

It catalyses the reaction dUTP + H2O = dUMP + diphosphate + H(+). Its pathway is pyrimidine metabolism; dUMP biosynthesis; dUMP from dCTP (dUTP route): step 2/2. This enzyme is involved in nucleotide metabolism: it produces dUMP, the immediate precursor of thymidine nucleotides and it decreases the intracellular concentration of dUTP so that uracil cannot be incorporated into DNA. The chain is Deoxyuridine 5'-triphosphate nucleotidohydrolase from Finegoldia magna (strain ATCC 29328 / DSM 20472 / WAL 2508) (Peptostreptococcus magnus).